The chain runs to 488 residues: Prostaglandin E2 receptor EP4 subtype (488 aa).

Residues 1 to 19 are Extracellular-facing; it reads MSIPGVNASFSSTPERLNS. The N-linked (GlcNAc...) asparagine glycan is linked to Asn7. The chain crosses the membrane as a helical span at residues 20–43; it reads PVTIPAVMFIFGVVGNLVAIVVLC. Residues 44 to 55 are Cytoplasmic-facing; that stretch reads KSRKEQKETTFY. The chain crosses the membrane as a helical span at residues 56-79; that stretch reads TLVCGLAVTDLLGTLLVSPVTIAT. Over 80 to 96 the chain is Extracellular; the sequence is YMKGQWPGDQALCDYST. A disulfide bridge links Cys92 with Cys170. A helical transmembrane segment spans residues 97-115; it reads FILLFFGLSGLSIICAMSI. Over 116–135 the chain is Cytoplasmic; the sequence is ERYLAINHAYFYSHYVDKRL. A helical membrane pass occupies residues 136-160; sequence AGLTLFAVYASNVLFCALPNMGLGR. At 161-184 the chain is on the extracellular side; that stretch reads SERQYPGTWCFIDWTTNVTAYAAF. A helical membrane pass occupies residues 185–211; the sequence is SYMYAGFSSFLILATVLCNVLVCGALL. The Cytoplasmic segment spans residues 212 to 270; that stretch reads RMLRQFMRRTSLGTEQHHAAAAAAVASVACRGHAAASPALQRLSDFRRRRSFRRIAGAE. Residues 271 to 298 traverse the membrane as a helical segment; that stretch reads IQMVILLIATSLVVLICSIPLVVRVFIN. Residues 299-315 are Extracellular-facing; it reads QLYQPSVVKDISRNPDL. A helical membrane pass occupies residues 316–335; that stretch reads QAIRIASVNPILDPWIYILL. The Cytoplasmic portion of the chain corresponds to 336–488; sequence RKTVLSKAIE…ETLKLSEKCI (153 aa). Residues 358–380 are disordered; sequence GRDGSAQHCSESRRTSSAMSGHS. 4 positions are modified to phosphoserine: Ser377, Ser380, Ser382, and Ser385.

The protein belongs to the G-protein coupled receptor 1 family. As to quaternary structure, interacts with FEM1A. Phosphorylation mediates agonist-mediated desensitization by promoting cytoplasmic retention.

The protein resides in the cell membrane. Receptor for prostaglandin E2 (PGE2). The activity of this receptor is mediated by G(s) proteins that stimulate adenylate cyclase. Has a relaxing effect on smooth muscle. May play an important role in regulating renal hemodynamics, intestinal epithelial transport, adrenal aldosterone secretion, and uterine function. The polypeptide is Prostaglandin E2 receptor EP4 subtype (Ptger4) (Rattus norvegicus (Rat)).